The primary structure comprises 129 residues: F(420)H(2) dehydrogenase subunit A (129 aa).

The next 3 helical transmembrane spans lie at 9–29, 64–84, and 95–115; these read IIDS…MPPM, FNVE…EVLF, and HGIT…LLFG.

Belongs to the complex I subunit 3 family. As to quaternary structure, the FPO complex is composed of at least 13 different subunits. FpoA, FpoH, FpoJ, FpoK, FpoL, FpoM and FpoN proteins constitute the membrane sector of the complex.

It localises to the cell membrane. It catalyses the reaction methanophenazine + reduced coenzyme F420-(gamma-L-Glu)(n) = dihydromethanophenazine + oxidized coenzyme F420-(gamma-L-Glu)(n) + H(+). Component of the F(420)H(2) dehydrogenase (FPO complex) which is part of the energy-conserving F(420)H(2):heterodisulfide oxidoreductase system. The membrane-bound electron transfer system of the complex plays an important role in the metabolism of methylotrophic methanogens when the organisms grow on methanol or methylamines. Catalyzes the oxidation of methanophenazine to dihydromethanophenazine. It shuttles electrons from F(420)H(2), via FAD and iron-sulfur (Fe-S) centers, to methanophenazine (an electron carrier in the membrane). It couples the redox reaction to proton translocation (for every two electrons transferred, two hydrogen ions are translocated across the cytoplasmic membrane), and thus conserves the redox energy in a proton gradient. It also catalyzes the oxidation of F(420)H(2) with quinones such as 2,3-dimethyl-1,4-naphthoquinone, 2-methyl-1,4-naphthoquinone and tetramethyl-p-benzoquinone. This is F(420)H(2) dehydrogenase subunit A (fpoA) from Methanosarcina mazei (strain ATCC BAA-159 / DSM 3647 / Goe1 / Go1 / JCM 11833 / OCM 88) (Methanosarcina frisia).